The following is a 207-amino-acid chain: Large ribosomal subunit protein uL4 (207 aa).

Positions Gly-47–Ile-78 are disordered. Residues Gly-60–Gly-71 are compositionally biased toward basic residues.

The protein belongs to the universal ribosomal protein uL4 family. In terms of assembly, part of the 50S ribosomal subunit.

One of the primary rRNA binding proteins, this protein initially binds near the 5'-end of the 23S rRNA. It is important during the early stages of 50S assembly. It makes multiple contacts with different domains of the 23S rRNA in the assembled 50S subunit and ribosome. Functionally, forms part of the polypeptide exit tunnel. The sequence is that of Large ribosomal subunit protein uL4 from Acholeplasma laidlawii (strain PG-8A).